We begin with the raw amino-acid sequence, 547 residues long: Phosphomethylpyrimidine synthase (547 aa).

Substrate-binding positions include Asn-146, Met-175, Tyr-204, His-240, 260–262 (SRG), 301–304 (DGLR), and Glu-340. His-344 lines the Zn(2+) pocket. Substrate is bound at residue Tyr-367. Zn(2+) is bound at residue His-408. [4Fe-4S] cluster-binding residues include Cys-488, Cys-491, and Cys-496.

This sequence belongs to the ThiC family. [4Fe-4S] cluster serves as cofactor.

The catalysed reaction is 5-amino-1-(5-phospho-beta-D-ribosyl)imidazole + S-adenosyl-L-methionine = 4-amino-2-methyl-5-(phosphooxymethyl)pyrimidine + CO + 5'-deoxyadenosine + formate + L-methionine + 3 H(+). It functions in the pathway cofactor biosynthesis; thiamine diphosphate biosynthesis. In terms of biological role, catalyzes the synthesis of the hydroxymethylpyrimidine phosphate (HMP-P) moiety of thiamine from aminoimidazole ribotide (AIR) in a radical S-adenosyl-L-methionine (SAM)-dependent reaction. In Mycobacterium bovis (strain ATCC BAA-935 / AF2122/97), this protein is Phosphomethylpyrimidine synthase.